The sequence spans 396 residues: Putative cytochrome P450 YjiB (396 aa).

Residue Cys-349 participates in heme binding.

It belongs to the cytochrome P450 family. Heme serves as cofactor.

In Bacillus subtilis (strain 168), this protein is Putative cytochrome P450 YjiB (yjiB).